The chain runs to 589 residues: Ectoderm-neural cortex protein 1 (589 aa).

Residues 46 to 114 (TDVLLHAGNR…AYSSRVIINE (69 aa)) enclose the BTB domain. Kelch repeat units follow at residues 296-340 (ALFL…AIGC), 341-388 (KVYI…ELKH), 389-444 (CLYV…SAKL), 446-492 (LFAF…VLGN), 494-538 (IFIM…ASGN), and 539-585 (KLYV…STWK).

In terms of assembly, binds to RB1. Hypophosphorylated RB1 associates with ENC1 during neuronal differentiation, while hyperphosphorylated RB1 associates with ENC1 in undifferentiating cells. Part of a complex that contains CUL3, RBX1 and ENC1. Interacts indirectly with KEAP1. Post-translationally, ubiquitinated by E3 ubiquitin ligase complex formed by CUL3 and RBX1 and probably targeted for proteasome-independent degradation. Quinone-induced oxidative stress increases its ubiquitination. Detected in fetal brain tissue, moderate expression in fetal heart, lung and kidney. Highly expressed in adult brain, particularly high in the hippocampus and amygdala, and spinal cord. Detectable in adult pancreas. May be down-regulated in neuroblastoma tumors.

The protein localises to the nucleus matrix. It is found in the cytoplasm. Its subcellular location is the cytoskeleton. Its function is as follows. Actin-binding protein involved in the regulation of neuronal process formation and in differentiation of neural crest cells. Down-regulates transcription factor NF2L2/NRF2 by decreasing the rate of protein synthesis and not via a ubiquitin-mediated proteasomal degradation mechanism. This is Ectoderm-neural cortex protein 1 (ENC1) from Homo sapiens (Human).